The sequence spans 377 residues: D-alanine--D-alanine ligase (377 aa).

Residues 137–346 (KELMTVNGIR…RSQQAEKLIQ (210 aa)) enclose the ATP-grasp domain. 167–222 (SKQLGEVVFVKAANQGSSVGVSRVTNAEEYENALRDSFQYDEKLLVEKAVESPTEL) contacts ATP. Positions 300, 313, and 315 each coordinate Mg(2+).

It belongs to the D-alanine--D-alanine ligase family. Requires Mg(2+) as cofactor. The cofactor is Mn(2+).

The protein localises to the cytoplasm. It catalyses the reaction 2 D-alanine + ATP = D-alanyl-D-alanine + ADP + phosphate + H(+). It functions in the pathway cell wall biogenesis; peptidoglycan biosynthesis. Functionally, cell wall formation. The protein is D-alanine--D-alanine ligase of Oenococcus oeni (strain ATCC BAA-331 / PSU-1).